The sequence spans 311 residues: Ceroid-lipofuscinosis neuronal protein 6 (311 aa).

The next 7 membrane-spanning stretches (helical) occupy residues 56–76, 81–101, 111–131, 179–199, 204–224, 225–245, and 260–280; these read WVLDFGRPIAMLVFPLEWFPL, VGDYFHMAYNVITPFLLLKLI, SITYVSIIIFIMGASIHLVGD, CMWYIPFFLILFMYFSGCFTA, SLIPGPALLLVAPSGLYYWYL, VTEGQIFILFIFTFFAMLALV, and LFLFSSFALTLLLVALWVAWL.

As to quaternary structure, interacts with CRMP2. Interacts with CLN5. Interacts with CLN3.

It localises to the endoplasmic reticulum membrane. Its subcellular location is the endoplasmic reticulum. This chain is Ceroid-lipofuscinosis neuronal protein 6 (CLN6), found in Homo sapiens (Human).